The chain runs to 362 residues: Holliday junction branch migration complex subunit RuvB (362 aa).

The tract at residues 1-20 (MKRTIMTNTDTFEQPNTGAN) is disordered. The tract at residues 15 to 203 (PNTGANEESL…FGFTAHLDFY (189 aa)) is large ATPase domain (RuvB-L). Residues leucine 42, arginine 43, glycine 84, lysine 87, threonine 88, threonine 89, 150–152 (EDF), arginine 193, tyrosine 203, and arginine 240 each bind ATP. Residue threonine 88 coordinates Mg(2+). The segment at 204–274 (PHEELEKLIE…DVKEALALYQ (71 aa)) is small ATPAse domain (RuvB-S). The segment at 277–362 (TEGLDRLDIA…ESAYDVNEMS (86 aa)) is head domain (RuvB-H). DNA contacts are provided by arginine 332 and arginine 337.

The protein belongs to the RuvB family. Homohexamer. Forms an RuvA(8)-RuvB(12)-Holliday junction (HJ) complex. HJ DNA is sandwiched between 2 RuvA tetramers; dsDNA enters through RuvA and exits via RuvB. An RuvB hexamer assembles on each DNA strand where it exits the tetramer. Each RuvB hexamer is contacted by two RuvA subunits (via domain III) on 2 adjacent RuvB subunits; this complex drives branch migration. In the full resolvosome a probable DNA-RuvA(4)-RuvB(12)-RuvC(2) complex forms which resolves the HJ.

The protein resides in the cytoplasm. It carries out the reaction ATP + H2O = ADP + phosphate + H(+). Functionally, the RuvA-RuvB-RuvC complex processes Holliday junction (HJ) DNA during genetic recombination and DNA repair, while the RuvA-RuvB complex plays an important role in the rescue of blocked DNA replication forks via replication fork reversal (RFR). RuvA specifically binds to HJ cruciform DNA, conferring on it an open structure. The RuvB hexamer acts as an ATP-dependent pump, pulling dsDNA into and through the RuvAB complex. RuvB forms 2 homohexamers on either side of HJ DNA bound by 1 or 2 RuvA tetramers; 4 subunits per hexamer contact DNA at a time. Coordinated motions by a converter formed by DNA-disengaged RuvB subunits stimulates ATP hydrolysis and nucleotide exchange. Immobilization of the converter enables RuvB to convert the ATP-contained energy into a lever motion, pulling 2 nucleotides of DNA out of the RuvA tetramer per ATP hydrolyzed, thus driving DNA branch migration. The RuvB motors rotate together with the DNA substrate, which together with the progressing nucleotide cycle form the mechanistic basis for DNA recombination by continuous HJ branch migration. Branch migration allows RuvC to scan DNA until it finds its consensus sequence, where it cleaves and resolves cruciform DNA. The polypeptide is Holliday junction branch migration complex subunit RuvB (Bifidobacterium adolescentis (strain ATCC 15703 / DSM 20083 / NCTC 11814 / E194a)).